The following is a 116-amino-acid chain: Peptidyl-tRNA hydrolase (116 aa).

This sequence belongs to the PTH2 family.

Its subcellular location is the cytoplasm. The catalysed reaction is an N-acyl-L-alpha-aminoacyl-tRNA + H2O = an N-acyl-L-amino acid + a tRNA + H(+). Functionally, the natural substrate for this enzyme may be peptidyl-tRNAs which drop off the ribosome during protein synthesis. The protein is Peptidyl-tRNA hydrolase of Methanococcus maripaludis (strain C6 / ATCC BAA-1332).